The chain runs to 340 residues: GTP 3',8-cyclase (340 aa).

One can recognise a Radical SAM core domain in the interval 8 to 227 (KLGRPIRDLR…DMIESHFDIE (220 aa)). A GTP-binding site is contributed by Arg17. [4Fe-4S] cluster is bound by residues Cys24 and Cys28. An S-adenosyl-L-methionine-binding site is contributed by Tyr30. Cys31 is a [4Fe-4S] cluster binding site. GTP is bound at residue Arg71. Residue Gly75 coordinates S-adenosyl-L-methionine. Thr102 serves as a coordination point for GTP. Ser126 is an S-adenosyl-L-methionine binding site. Lys163 lines the GTP pocket. Met197 contributes to the S-adenosyl-L-methionine binding site. [4Fe-4S] cluster contacts are provided by Cys261 and Cys264. 266 to 268 (RAR) provides a ligand contact to GTP. Cys278 serves as a coordination point for [4Fe-4S] cluster.

The protein belongs to the radical SAM superfamily. MoaA family. Monomer and homodimer. Requires [4Fe-4S] cluster as cofactor.

The catalysed reaction is GTP + AH2 + S-adenosyl-L-methionine = (8S)-3',8-cyclo-7,8-dihydroguanosine 5'-triphosphate + 5'-deoxyadenosine + L-methionine + A + H(+). Its pathway is cofactor biosynthesis; molybdopterin biosynthesis. Functionally, catalyzes the cyclization of GTP to (8S)-3',8-cyclo-7,8-dihydroguanosine 5'-triphosphate. In Staphylococcus haemolyticus (strain JCSC1435), this protein is GTP 3',8-cyclase.